We begin with the raw amino-acid sequence, 1030 residues long: FACT complex subunit spt-16 (1030 aa).

Residues 424 to 445 (RLKSNVIKFKEEQENREAEKDN) adopt a coiled-coil conformation. 2 stretches are compositionally biased toward basic and acidic residues: residues 435–449 (EQENREAEKDNDQKK) and 464–477 (TRNKTTNEELRKER). Disordered stretches follow at residues 435 to 477 (EQEN…RKER) and 491 to 514 (ARLSKQGGGTDEKKSKKSNVSYKT). A coiled-coil region spans residues 623–645 (RLIKEMQKRFKTEEAEEREKEGA). The interval 927-1030 (VESDNEEAMD…KSGPSHKRRK (104 aa)) is disordered. Composition is skewed to acidic residues over residues 929 to 951 (SDNEEAMDDSDDSDAYDPEEEDA) and 958 to 983 (ESDEDESEGEETESDDDDEGSLDSDE). Residues 987–1007 (KDWSDLEEEAANADKRREVEE) adopt a coiled-coil conformation. Residues 998 to 1014 (NADKRREVEEPSRDRDR) are compositionally biased toward basic and acidic residues. Basic residues predominate over residues 1015 to 1030 (KRPHSSKSGPSHKRRK).

It belongs to the peptidase M24 family. SPT16 subfamily. As to quaternary structure, component of the FACT complex, a stable heterodimer of spt-16 and hmg-3 or hmg-4. Expressed in the germline and somatic cells.

It is found in the nucleus. The protein localises to the chromosome. Its function is as follows. Component of the FACT complex, a general chromatin factor that acts to reorganize nucleosomes. The FACT complex is involved in multiple processes that require DNA as a template such as mRNA elongation, DNA replication and DNA repair. During transcription elongation the FACT complex acts as a histone chaperone that both destabilizes and restores nucleosomal structure. It facilitates the passage of RNA polymerase II and transcription by promoting the dissociation of one histone H2A-H2B dimer from the nucleosome, then subsequently promotes the reestablishment of the nucleosome following the passage of RNA polymerase II. In embryos, promotes cell cycle progression and chromosomal segregation. Plays a role in the development of the anterior pharynx during embryonic development. The sequence is that of FACT complex subunit spt-16 from Caenorhabditis elegans.